The following is a 446-amino-acid chain: UDP-N-acetylmuramoylalanine--D-glutamate ligase (446 aa).

An ATP-binding site is contributed by 115–121 (GTNGKTT).

The protein belongs to the MurCDEF family.

The protein resides in the cytoplasm. It catalyses the reaction UDP-N-acetyl-alpha-D-muramoyl-L-alanine + D-glutamate + ATP = UDP-N-acetyl-alpha-D-muramoyl-L-alanyl-D-glutamate + ADP + phosphate + H(+). The protein operates within cell wall biogenesis; peptidoglycan biosynthesis. Cell wall formation. Catalyzes the addition of glutamate to the nucleotide precursor UDP-N-acetylmuramoyl-L-alanine (UMA). In Trichlorobacter lovleyi (strain ATCC BAA-1151 / DSM 17278 / SZ) (Geobacter lovleyi), this protein is UDP-N-acetylmuramoylalanine--D-glutamate ligase.